The chain runs to 292 residues: RWD domain-containing protein 2A (292 aa).

The RWD domain maps to 14–134 (LEMEMLFSMF…QWLQDNSASY (121 aa)).

This is RWD domain-containing protein 2A (RWDD2A) from Macaca fascicularis (Crab-eating macaque).